The primary structure comprises 176 residues: Oleosin Ara h 14.0101 (176 aa).

The residue at position 2 (alanine 2) is an N-acetylalanine; alternate. Transmembrane regions (helical) follow at residues 50–80 (IIAVLVGVPTGGTLLLLSGLSLLGTIIGLAI) and 95–117 (AVVTIGLAVTGILTAGACGLTGL). Residues 157–176 (TKDAGQQIQTKAQDVKRSSS) form a disordered region.

Belongs to the oleosin family. As to quaternary structure, homodimer. Forms oligomers. Expressed in seeds (at protein level). Not expressed in leaves.

Its subcellular location is the lipid droplet. It is found in the membrane. Its function is as follows. May have a structural role to stabilize the lipid body during desiccation of the seed by preventing coalescence of the oil. Probably interacts with both lipid and phospholipid moieties of lipid bodies. May also provide recognition signals for specific lipase anchorage in lipolysis during seedling growth. In Arachis hypogaea (Peanut), this protein is Oleosin Ara h 14.0101.